A 548-amino-acid polypeptide reads, in one-letter code: Probable malate:quinone oxidoreductase (548 aa).

This sequence belongs to the MQO family. Requires FAD as cofactor.

It carries out the reaction (S)-malate + a quinone = a quinol + oxaloacetate. It functions in the pathway carbohydrate metabolism; tricarboxylic acid cycle; oxaloacetate from (S)-malate (quinone route): step 1/1. The protein is Probable malate:quinone oxidoreductase of Escherichia coli O6:H1 (strain CFT073 / ATCC 700928 / UPEC).